We begin with the raw amino-acid sequence, 61 residues long: Large ribosomal subunit protein eL24 (61 aa).

Zn(2+) is bound by residues C7, C10, C33, and C37. The segment at 7-37 (CSFCGKEIPPATGLMYIRNDGSILWFCSNKC) adopts a C4-type zinc-finger fold.

It belongs to the eukaryotic ribosomal protein eL24 family. As to quaternary structure, part of the 50S ribosomal subunit. Forms a cluster with proteins L3 and L14. The cofactor is Zn(2+).

Its function is as follows. Binds to the 23S rRNA. This Sulfurisphaera tokodaii (strain DSM 16993 / JCM 10545 / NBRC 100140 / 7) (Sulfolobus tokodaii) protein is Large ribosomal subunit protein eL24.